The sequence spans 161 residues: Lipoprotein signal peptidase (161 aa).

3 helical membrane-spanning segments follow: residues 4–24, 61–81, and 87–107; these read LLVV…WSKY, KMIF…YLLI, and SIWY…NFID. Residues Asp116 and Asp132 contribute to the active site. A helical membrane pass occupies residues 127 to 147; the sequence is IFNVADSTLVVGVICIFIYLI.

The protein belongs to the peptidase A8 family.

It is found in the cell membrane. It catalyses the reaction Release of signal peptides from bacterial membrane prolipoproteins. Hydrolyzes -Xaa-Yaa-Zaa-|-(S,diacylglyceryl)Cys-, in which Xaa is hydrophobic (preferably Leu), and Yaa (Ala or Ser) and Zaa (Gly or Ala) have small, neutral side chains.. It participates in protein modification; lipoprotein biosynthesis (signal peptide cleavage). This protein specifically catalyzes the removal of signal peptides from prolipoproteins. The chain is Lipoprotein signal peptidase from Enterococcus faecalis (strain ATCC 700802 / V583).